An 860-amino-acid polypeptide reads, in one-letter code: uncharacterized protein (860 aa).

Composition is skewed to basic and acidic residues over residues 334 to 345 (LEKKSLQSDSKN) and 536 to 551 (EDQKVDSDKDGKLSDK). 4 disordered regions span residues 334–360 (LEKKSLQSDSKNKKSQKRKKDEDLRKE), 530–551 (EEDDVSEDQKVDSDKDGKLSDK), 708–798 (ARKT…EDEF), and 813–842 (PFNETDDEEEIQTVDHSETHSHKKKKRKAI). Composition is skewed to acidic residues over residues 716 to 725 (DEEGEIDEDE), 738 to 750 (EMDEEESDFDSEE), and 813 to 824 (PFNETDDEEEIQ). 2 positions are modified to phosphoserine: Ser-744 and Ser-748.

It belongs to the CBF/MAK21 family.

This is an uncharacterized protein from Schizosaccharomyces pombe (strain 972 / ATCC 24843) (Fission yeast).